Here is a 625-residue protein sequence, read N- to C-terminus: RecQ-mediated genome instability protein 1 (625 aa).

M1 bears the N-acetylmethionine mark. S225 is modified (phosphoserine). Residues 257-282 (LTANNDTSSERCFTTGSSSNTIPTRQ) form a disordered region. Residues S284 and S292 each carry the phosphoserine modification. Glycyl lysine isopeptide (Lys-Gly) (interchain with G-Cter in SUMO2) cross-links involve residues K334, K387, and K426.

It belongs to the RMI1 family. In terms of assembly, component of the RMI complex, containing at least TOP3A, RMI1 and RMI2. The RMI complex interacts with BLM. Directly interacts with RMI2 and TOP3A. May bind DHJ. Interacts (via N-terminal region) with BLM; the interaction is direct.

It localises to the nucleus. Functionally, essential component of the RMI complex, a complex that plays an important role in the processing of homologous recombination intermediates to limit DNA crossover formation in cells. Promotes TOP3A binding to double Holliday junctions (DHJ) and hence stimulates TOP3A-mediated dissolution. Required for BLM phosphorylation during mitosis. Within the BLM complex, required for BLM and TOP3A stability. The protein is RecQ-mediated genome instability protein 1 (RMI1) of Homo sapiens (Human).